A 23-amino-acid polypeptide reads, in one-letter code: Benzaldehyde dehydrogenase [NAD(+)] I (23 aa).

It belongs to the aldehyde dehydrogenase family. In terms of assembly, homotetramer.

The catalysed reaction is benzaldehyde + NAD(+) + H2O = benzoate + NADH + 2 H(+). In Acinetobacter guillouiae (Acinetobacter genomosp. 11), this protein is Benzaldehyde dehydrogenase [NAD(+)] I.